Here is a 73-residue protein sequence, read N- to C-terminus: MMSKLGVLLTVCPLLFPLTALPPDGDQPADRPAERMQDDISSDEHPLFDKRQNCCNGGCSSKWCRDHARCCGR.

Positions 1 to 20 (MMSKLGVLLTVCPLLFPLTA) are cleaved as a signal peptide. The disordered stretch occupies residues 20-40 (ALPPDGDQPADRPAERMQDDI). Residues 21-49 (LPPDGDQPADRPAERMQDDISSDEHPLFD) constitute a propeptide that is removed on maturation. Residues 28–40 (PADRPAERMQDDI) show a composition bias toward basic and acidic residues. Gln-52 is subject to Pyrrolidone carboxylic acid. Disulfide bonds link Cys-54-Cys-64, Cys-55-Cys-70, and Cys-59-Cys-71. A Cysteine amide modification is found at Cys-71.

Belongs to the conotoxin M superfamily. In terms of tissue distribution, expressed by the venom duct.

The protein localises to the secreted. Functionally, mu-conotoxins block voltage-gated sodium channels (Nav). This toxin moderately blocks rNav1.1/SCN1A, rNav1.2/SCN2A, rNav1.3/SCN3A, rNav1.4/SCN4A, and mNav1.6/SCN8A. The polypeptide is Mu-conotoxin SIIIA (Conus striatus (Striated cone)).